We begin with the raw amino-acid sequence, 86 residues long: Large ribosomal subunit protein bL31B (86 aa).

It belongs to the bacterial ribosomal protein bL31 family. Type B subfamily. In terms of assembly, part of the 50S ribosomal subunit.

The sequence is that of Large ribosomal subunit protein bL31B from Salmonella agona (strain SL483).